The primary structure comprises 624 residues: Exocyst complex component EXO70B1 (624 aa).

The interval 148 to 176 (FGLNPQGDAGAMNHRFDSEEEEDDDRDFN) is disordered.

This sequence belongs to the EXO70 family. As to quaternary structure, interacts with EXO70B2, SEC5A and EXO84B. Binds to PUB18. Binds directly to B1L at the plasma membrane and in small vesicles. Target of the E3 ubiquitin-protein ligase PUB18 that mediates its ubiquitination and degradation via the 26S proteasome.

Its subcellular location is the cytoplasmic vesicle. The protein resides in the phagosome. It localises to the endomembrane system. The protein localises to the cell membrane. It is found in the vesicle. Component of an exocyst subcomplex specifically involved in autophagy-related, Golgi-independent membrane traffic to the vacuole. Regulates autophagosome formation and autophagy-related Golgi-independent import into the vacuole. Positive regulator of both abscisic acid (ABA)-promoted and mannitol (drought)-promoted stomatal closure. Involved in the regulation of lateral root formation. This chain is Exocyst complex component EXO70B1, found in Arabidopsis thaliana (Mouse-ear cress).